The chain runs to 174 residues: MAQESCDLNKDEAEILKPSSSSSPSPSPTTASPSPPTAQMTEPPPPQSTPPTPPAAAAAASAAAAPQFSAKNCEGILIEVSKKRKLAEATATDANAVVVAAVAEPLSPVLFVNRCNVCRKRVGLTGFRCRCGELFCPRHRHSETHECSFDYKTAGREEIARANPVIRAAKIIKI.

Positions 1 to 61 (MAQESCDLNK…TPPAAAAAAS (61 aa)) are disordered. Residues 18–41 (PSSSSSPSPSPTTASPSPPTAQMT) are compositionally biased toward low complexity. Positions 42-54 (EPPPPQSTPPTPP) are enriched in pro residues. The segment at 109-155 (VLFVNRCNVCRKRVGLTGFRCRCGELFCPRHRHSETHECSFDYKTAG) adopts an AN1-type zinc-finger fold. Zn(2+) is bound by residues Cys-115, Cys-118, Cys-129, Cys-131, Cys-136, His-139, His-145, and Cys-147.

Functionally, may be involved in environmental stress response. In Oryza sativa subsp. japonica (Rice), this protein is Zinc finger AN1 domain-containing stress-associated protein 15 (SAP15).